Here is a 241-residue protein sequence, read N- to C-terminus: 6-hydroxymethyl-7,8-dihydropterin pyrophosphokinase (241 aa).

It belongs to the archaeal 6-HMPDK family. Mg(2+) serves as cofactor.

It catalyses the reaction 6-hydroxymethyl-7,8-dihydropterin + ATP = (7,8-dihydropterin-6-yl)methyl diphosphate + AMP + H(+). Its pathway is cofactor biosynthesis; 5,6,7,8-tetrahydromethanopterin biosynthesis. Catalyzes the transfer of diphosphate from ATP to 6-hydroxymethyl-7,8-dihydropterin (6-HMD), leading to 6-hydroxymethyl-7,8-dihydropterin diphosphate (6-HMDP). The chain is 6-hydroxymethyl-7,8-dihydropterin pyrophosphokinase from Methanocaldococcus jannaschii (strain ATCC 43067 / DSM 2661 / JAL-1 / JCM 10045 / NBRC 100440) (Methanococcus jannaschii).